Consider the following 386-residue polypeptide: MGQPTTTSLFMRDVMFHRMTGTSQAVNDVATLSGERREIIRRALNKKILVPNILELMPAWPSEFQPNIDEVNVEIDEWLKTVNVAKEKKLKHRARGNYTLLAGIYYPHCRKEKMLALSQFLYWIFFWDDEIDTGGELTEDREGTILCCAETNKCINDCLGPEPNYTPPPGSRGTVEMLYPILRDLRAGLSPVSTMRLKQELHDYVNGVKNQQKVRQEDHLPNPWDHFQMRVDDVGVIPSITQNEYAMDFTLPDWIRRHEAMEEIVLQCTKLTILLNEILSLQKEFRVSQLENLCLLFMNTYDMSIEQSIHKVLGLLKDHYKICIEAEARLPWSTTDEKLNNNIREYIRGCQRLATGTACWSYNCERYFKLSQLNDQQELLLDLSRT.

Mg(2+) is bound by residues Asp128, Asn276, and Ser280. Residues 128–132 carry the D(D/E)XX(D/E) motif motif; that stretch reads DDEID. An NSE motif motif is present at residues 276-284; that stretch reads NEILSLQKE. Positions 360 to 367 match the WxxxxxRY motif motif; sequence WSYNCERY. Residues Arg366 and Tyr367 each contribute to the (2E,6E)-farnesyl diphosphate site.

It belongs to the terpene synthase family. As to quaternary structure, homodimer. It depends on Mg(2+) as a cofactor.

The catalysed reaction is (2E,6E)-farnesyl diphosphate + H2O = trichobrasilenol + diphosphate. It carries out the reaction (2E,6E)-farnesyl diphosphate = alpha-humulene + diphosphate. The enzyme catalyses (2E,6E)-farnesyl diphosphate = (-)-(E)-beta-caryophyllene + diphosphate. It catalyses the reaction (2E,6E)-farnesyl diphosphate = (E)-2-epi-beta-caryophyllene + diphosphate. The catalysed reaction is (2E,6E)-farnesyl diphosphate + H2O = (+)-isoafricanol + diphosphate. It carries out the reaction (2E,6E)-farnesyl diphosphate + H2O = (+)-(2S,3R,9R)-pristinol + diphosphate. The enzyme catalyses (2E,6E)-farnesyl diphosphate = african-3-ene + diphosphate. It catalyses the reaction (2E,6E)-farnesyl diphosphate = african-1-ene + diphosphate. The protein operates within sesquiterpene biosynthesis. In terms of biological role, terpene cyclase that is able to convert FPP into a mixture of sesquiterpene hydrocarbons and alcohols. The main product is trichobrasilenol. Additionally, side products include alpha-humulene, caryophyllene, 2-epi-caryophyllene, african-3-ene, african-1-ene, isoafricanol and pristinol. Does not accept GPP, GGPP, and GFPP as substrates. The chain is Terpene cyclase 6 from Hypocrea atroviridis (Trichoderma atroviride).